The primary structure comprises 276 residues: Pirin-like protein CC_0481 (276 aa).

It belongs to the pirin family.

This chain is Pirin-like protein CC_0481, found in Caulobacter vibrioides (strain ATCC 19089 / CIP 103742 / CB 15) (Caulobacter crescentus).